The following is a 180-amino-acid chain: Inner membrane-spanning protein YciB (180 aa).

A run of 5 helical transmembrane segments spans residues 25 to 45 (QNATLYMLITSVICITLCYII), 49 to 69 (VSKLSIISTTVLLVSGSITLI), 76 to 96 (IKIKPTILYVIFGIIFLMSGI), 118 to 138 (ITLSYRTAAFFFFMAVVNEIV), and 150 to 170 (FKVFGIIPITFIFIVLQLPLL).

Belongs to the YciB family.

It is found in the cell inner membrane. Functionally, plays a role in cell envelope biogenesis, maintenance of cell envelope integrity and membrane homeostasis. The polypeptide is Inner membrane-spanning protein YciB (Rickettsia akari (strain Hartford)).